Consider the following 407-residue polypeptide: Aurora kinase A-A (407 aa).

Basic and acidic residues predominate over residues 1–10 (MERAVKENHK). A disordered region spans residues 1–130 (MERAVKENHK…KTSAVPKEEG (130 aa)). Composition is skewed to polar residues over residues 67–77 (ILSSQKPTTQI) and 84–110 (QGHQ…STPN). The Protein kinase domain maps to 140–390 (FEIGRPLGKG…LKGVLEHPWI (251 aa)). ATP-binding positions include lysine 150, lysine 169, and 217–220 (LDYA). Aspartate 263 acts as the Proton acceptor in catalysis. Aspartate 281 lines the ATP pocket. The interval 287 to 300 (HAPSSRRTTLCGTL) is activation segment.

It belongs to the protein kinase superfamily. Ser/Thr protein kinase family. Aurora subfamily. As to quaternary structure, interacts with kif2c and kif11. In terms of processing, phosphorylated. Autophosphorylated on a serine residue. Highly expressed in ovary and testis.

It localises to the cytoplasm. The protein resides in the cytoskeleton. The protein localises to the spindle. It is found in the microtubule organizing center. Its subcellular location is the centrosome. The catalysed reaction is L-seryl-[protein] + ATP = O-phospho-L-seryl-[protein] + ADP + H(+). The enzyme catalyses L-threonyl-[protein] + ATP = O-phospho-L-threonyl-[protein] + ADP + H(+). Functionally, mitotic serine/threonine kinases that contributes to the regulation of cell cycle progression. Associates with the centrosome and the spindle microtubules during mitosis and plays a critical role in various mitotic events including the establishment of mitotic spindle, centrosome duplication, centrosome separation as well as maturation, chromosomal alignment, spindle assembly checkpoint, and cytokinesis. Phosphorylates numerous target proteins. Important for microtubule formation and/or stabilization. The chain is Aurora kinase A-A (aurka-a) from Xenopus laevis (African clawed frog).